Here is a 344-residue protein sequence, read N- to C-terminus: Thioredoxin reductase FGSG_00043 (344 aa).

FAD is bound by residues 12–15 (GGPA), 34–39 (DSVSYR), His-51, and Ala-121. A disulfide bridge connects residues Cys-165 and Cys-168. Residues Asp-314 and 321-322 (FV) each bind FAD.

The protein belongs to the class-II pyridine nucleotide-disulfide oxidoreductase family. As to quaternary structure, homodimer. FAD serves as cofactor.

The protein operates within mycotoxin biosynthesis. Functionally, thioredoxin reductase; part of the gene cluster that mediates the biosynthesis of gramillins A and B, bicyclic lipopeptides that induce cell death in maize leaves but not in wheat leaves. The nonribosomal peptide synthetase GRA1 incorporates respectively a glutamic adic (Glu), a leucine (Leu), a serine (Ser), a hydroxyglutamine (HOGln), a 2-amino decanoic acid, and 2 cysteins (CysB and CysA). The biosynthesis of 2-amino decanoic acid incorporated in gramillins could be initiated by a fatty acid synthase composed of the alpha and beta subunits FGSG_00036 and FGSG_11656. The cytochrome P450 monooxygenase FGSG_15680 could hydroxylate the fatty acid chain. Subsequent oxidation to the ketone by the oxidoreductase FGSG_00048 and transamination by aminotransferase FGSG_00049 could form 2-amino-decanoic acid. On the other hand, FGSG_15680 could also be responsible for the HO-modified glutamine at the gamma-position. Whether hydroxylation occurs on the fully assembled product or on the Gln residue prior to assembly into the gramillins requires further proof. The thioredoxin FGSG_00043 could also be required for the disulfide-bond formation between CysA and CysB. The specific involvement of the remaining proteins from the cluster is more difficult to discern, but could have broader regulatory (FGSG_00040 and FGSG_11657) or enzymatic functions (FGSG_00044 and FGSG_00045). The final C-domain of GRA1 does not possess the expected sequence of a termination CT domain, often implicated in macrocyclization and release of a cyclopeptidein fungal NRPs; and the thioesterase FGSG_00047 may act in concert with the terminal C-domain of GRA1 to catalyze the formation of the macrocyclic anhydride and release of the products. The polypeptide is Thioredoxin reductase FGSG_00043 (Gibberella zeae (strain ATCC MYA-4620 / CBS 123657 / FGSC 9075 / NRRL 31084 / PH-1) (Wheat head blight fungus)).